A 232-amino-acid chain; its full sequence is 5'-methylthioadenosine/S-adenosylhomocysteine nucleosidase (232 aa).

Glutamate 14 (proton acceptor) is an active-site residue. Substrate contacts are provided by residues glycine 80, valine 154, and 175–176; that span reads ME. Aspartate 199 acts as the Proton donor in catalysis.

Belongs to the PNP/UDP phosphorylase family. MtnN subfamily.

The enzyme catalyses S-adenosyl-L-homocysteine + H2O = S-(5-deoxy-D-ribos-5-yl)-L-homocysteine + adenine. It catalyses the reaction S-methyl-5'-thioadenosine + H2O = 5-(methylsulfanyl)-D-ribose + adenine. It carries out the reaction 5'-deoxyadenosine + H2O = 5-deoxy-D-ribose + adenine. It functions in the pathway amino-acid biosynthesis; L-methionine biosynthesis via salvage pathway; S-methyl-5-thio-alpha-D-ribose 1-phosphate from S-methyl-5'-thioadenosine (hydrolase route): step 1/2. In terms of biological role, catalyzes the irreversible cleavage of the glycosidic bond in both 5'-methylthioadenosine (MTA) and S-adenosylhomocysteine (SAH/AdoHcy) to adenine and the corresponding thioribose, 5'-methylthioribose and S-ribosylhomocysteine, respectively. Also cleaves 5'-deoxyadenosine, a toxic by-product of radical S-adenosylmethionine (SAM) enzymes, into 5-deoxyribose and adenine. The polypeptide is 5'-methylthioadenosine/S-adenosylhomocysteine nucleosidase (Actinobacillus pleuropneumoniae serotype 5b (strain L20)).